The primary structure comprises 773 residues: Preaspterpenacid I synthase sttA (773 aa).

The segment at 4–359 is sesterterpenoid synthase; sequence ISDVMKHCVP…RYHRTDLATT (356 aa). Aspartate 105 contacts Mg(2+). Residue aspartate 105 participates in substrate binding. The substrate stretch occupies residues 211 to 214; that stretch reads RVNE. Residue asparagine 255 participates in substrate binding. 2 substrate regions span residues 259 to 263 and 350 to 351; these read SFPKE and RY. The segment at 360 to 769 is geranylfarnesyl diphosphate synthase; sequence AEDRATLIGK…RMMLLGMGPK (410 aa). The tract at residues 423–447 is disordered; the sequence is AFKKRNSRNGKQNGTEGSKSTFTNG. Polar residues predominate over residues 431-447; that stretch reads NGKQNGTEGSKSTFTNG. Lysine 493, arginine 496, and histidine 525 together coordinate isopentenyl diphosphate. Residues aspartate 532 and aspartate 536 each coordinate Mg(2+). Arginine 541 is a binding site for dimethylallyl diphosphate. Arginine 542 contributes to the isopentenyl diphosphate binding site. Positions 614, 615, 652, 659, and 669 each coordinate dimethylallyl diphosphate.

It in the N-terminal section; belongs to the terpene synthase family. In the C-terminal section; belongs to the FPP/GGPP synthase family.

The enzyme catalyses 4 isopentenyl diphosphate + dimethylallyl diphosphate = (2E,6E,10E,14E)-geranylfarnesyl diphosphate + 4 diphosphate. The catalysed reaction is (2E,6E,10E,14E)-geranylfarnesyl diphosphate + H2O = preaspterpenacid acid I + diphosphate. Its pathway is secondary metabolite biosynthesis; terpenoid biosynthesis. Its function is as follows. Sesterterpenoid synthase; part of the gene cluster that mediates the biosynthesis of aspterpenacids. Performs both prenyl transferase and terpene cyclase activity, converting isopentenyl diphosphate and dimethylallyl diphosphate into geranylfarnesyl diphosphate (GFPP) and then converting GFPP into preaspterpenacid I. C22-oxidative modification of preaspterpenacid I by the cytochrome P450 monooxygenase sttB then leads to preaspterpenacid II. It has still to be determined how preaspterpenacid II is further modified to produce aspterpenacids. The protein is Preaspterpenacid I synthase sttA of Aspergillus terreus (strain NIH 2624 / FGSC A1156).